Consider the following 145-residue polypeptide: Large ribosomal subunit protein uL13 (145 aa).

It belongs to the universal ribosomal protein uL13 family. Part of the 50S ribosomal subunit.

In terms of biological role, this protein is one of the early assembly proteins of the 50S ribosomal subunit, although it is not seen to bind rRNA by itself. It is important during the early stages of 50S assembly. The protein is Large ribosomal subunit protein uL13 of Bacillus licheniformis (strain ATCC 14580 / DSM 13 / JCM 2505 / CCUG 7422 / NBRC 12200 / NCIMB 9375 / NCTC 10341 / NRRL NRS-1264 / Gibson 46).